Consider the following 163-residue polypeptide: Large ribosomal subunit protein uL10 (163 aa).

This sequence belongs to the universal ribosomal protein uL10 family. In terms of assembly, part of the ribosomal stalk of the 50S ribosomal subunit. The N-terminus interacts with L11 and the large rRNA to form the base of the stalk. The C-terminus forms an elongated spine to which L12 dimers bind in a sequential fashion forming a multimeric L10(L12)X complex.

Forms part of the ribosomal stalk, playing a central role in the interaction of the ribosome with GTP-bound translation factors. In Actinobacillus pleuropneumoniae serotype 5b (strain L20), this protein is Large ribosomal subunit protein uL10.